The following is a 354-amino-acid chain: MEFRGDANQRIARISAHLTPQMEAKNSVIGRENCRAKGGNPGFKVAILGAAGGIGQSLSLLMKMNPLVSLLHLYDVVNAPGVTADVSHMDTGAVVRGFLGAKQLEDALTGMDLVIIPAGIPRKPGMTRDDLFKINAGIVKTLCEGVAKCCPNAIVNLISNPVNSTVPIAAEVFKKAGTYDPKKLLGVTTLDVARANTFVAEVLGLDPREVDVPVVGGHAGVTILPLLSQVKPPSSFTPQEIEYLTNRIQNGGTEVVEAKAGAGSATLSMAYAAAKFADACLRGLRGDANVVECSFVASQVTELAFFATKVRLGRTGAEEVYQLGPLNEYERIGLEKAKDELAGSIQKGVEFIRK.

The segment at 10 to 18 is peroxisomal targeting signal PTS2; it reads RIARISAHL. NAD(+) is bound by residues 49–55 and Asp75; that span reads GAAGGIG. Residues Arg122 and Arg128 each coordinate substrate. NAD(+) contacts are provided by residues Asn135 and 158–160; that span reads ISN. Substrate-binding residues include Asn160 and Arg194. His218 functions as the Proton acceptor in the catalytic mechanism. Met269 is an NAD(+) binding site.

It belongs to the LDH/MDH superfamily. MDH type 1 family. Homodimer. In terms of tissue distribution, expressed in rosette leaves.

It is found in the peroxisome. It carries out the reaction (S)-malate + NAD(+) = oxaloacetate + NADH + H(+). Its function is as follows. Catalyzes a reversible NAD-dependent dehydrogenase reaction involved in central metabolism and redox homeostasis between organelle compartments. Peroxisomal NAD-dependent malate dehydrogenase involved in fatty acid beta-oxidation. Reoxidizes NADH from the beta-oxidation and provides NAD for the conversion of fatty acyl-CoA to acetyl-CoA. Does not participate directly in the glyoxylate cycle. Required for maintenance of photosynthetic rates under photorespiratory conditions, and carbon flow during photorespiration. Supplies NADH reductant to the peroxisomal hydroxypyruvate reductase (HPR), which reduces hydroxypyruvate into glycerate in the photorespiratory cycle. The polypeptide is Malate dehydrogenase 2, peroxisomal (Arabidopsis thaliana (Mouse-ear cress)).